The primary structure comprises 217 residues: Somatotropin (217 aa).

Residues 1 to 26 form the signal peptide; the sequence is MATGSRTSLLLAFGLLCLPWLQEGSA. Histidine 44 contacts Zn(2+). Residues cysteine 79 and cysteine 191 are joined by a disulfide bond. The residue at position 132 (serine 132) is a Phosphoserine. The residue at position 163 (glutamine 163) is a Deamidated glutamine; by deterioration. Phosphoserine is present on serine 176. At asparagine 178 the chain carries Deamidated asparagine; by deterioration. Glutamate 200 provides a ligand contact to Zn(2+). Cysteine 208 and cysteine 215 are joined by a disulfide.

It belongs to the somatotropin/prolactin family. Monomer, dimer, trimer, tetramer and pentamer, disulfide-linked or non-covalently associated, in homomeric and heteromeric combinations. Can also form a complex either with GHBP or with the alpha2-macroglobulin complex.

It localises to the secreted. Plays an important role in growth control. Its major role in stimulating body growth is to stimulate the liver and other tissues to secrete IGF1. It stimulates both the differentiation and proliferation of myoblasts. It also stimulates amino acid uptake and protein synthesis in muscle and other tissues. This chain is Somatotropin (GH1), found in Homo sapiens (Human).